The following is a 248-amino-acid chain: tRNA pseudouridine synthase A (248 aa).

The Nucleophile role is filled by Asp-52. Substrate is bound at residue Tyr-113.

Belongs to the tRNA pseudouridine synthase TruA family. Homodimer.

The catalysed reaction is uridine(38/39/40) in tRNA = pseudouridine(38/39/40) in tRNA. In terms of biological role, formation of pseudouridine at positions 38, 39 and 40 in the anticodon stem and loop of transfer RNAs. The chain is tRNA pseudouridine synthase A from Mesorhizobium japonicum (strain LMG 29417 / CECT 9101 / MAFF 303099) (Mesorhizobium loti (strain MAFF 303099)).